Here is a 174-residue protein sequence, read N- to C-terminus: RNA pyrophosphohydrolase (174 aa).

Residues 6–149 form the Nudix hydrolase domain; it reads GYRPNVGIVI…KRDVYRRALK (144 aa). Positions 38–59 match the Nudix box motif; the sequence is GGIDEGETPEQAMYRELYEEVG.

This sequence belongs to the Nudix hydrolase family. RppH subfamily. Requires a divalent metal cation as cofactor.

Accelerates the degradation of transcripts by removing pyrophosphate from the 5'-end of triphosphorylated RNA, leading to a more labile monophosphorylated state that can stimulate subsequent ribonuclease cleavage. The sequence is that of RNA pyrophosphohydrolase from Photobacterium profundum (strain SS9).